The sequence spans 373 residues: 4-hydroxy-3-methylbut-2-en-1-yl diphosphate synthase (flavodoxin) (373 aa).

Cysteine 270, cysteine 273, cysteine 305, and glutamate 312 together coordinate [4Fe-4S] cluster.

This sequence belongs to the IspG family. Requires [4Fe-4S] cluster as cofactor.

It catalyses the reaction (2E)-4-hydroxy-3-methylbut-2-enyl diphosphate + oxidized [flavodoxin] + H2O + 2 H(+) = 2-C-methyl-D-erythritol 2,4-cyclic diphosphate + reduced [flavodoxin]. It participates in isoprenoid biosynthesis; isopentenyl diphosphate biosynthesis via DXP pathway; isopentenyl diphosphate from 1-deoxy-D-xylulose 5-phosphate: step 5/6. Functionally, converts 2C-methyl-D-erythritol 2,4-cyclodiphosphate (ME-2,4cPP) into 1-hydroxy-2-methyl-2-(E)-butenyl 4-diphosphate. The protein is 4-hydroxy-3-methylbut-2-en-1-yl diphosphate synthase (flavodoxin) of Klebsiella pneumoniae (strain 342).